The sequence spans 85 residues: DNA-directed RNA polymerase subunit omega (85 aa).

Belongs to the RNA polymerase subunit omega family. As to quaternary structure, the RNAP catalytic core consists of 2 alpha, 1 beta, 1 beta' and 1 omega subunit. When a sigma factor is associated with the core the holoenzyme is formed, which can initiate transcription.

The enzyme catalyses RNA(n) + a ribonucleoside 5'-triphosphate = RNA(n+1) + diphosphate. Promotes RNA polymerase assembly. Latches the N- and C-terminal regions of the beta' subunit thereby facilitating its interaction with the beta and alpha subunits. In Tropheryma whipplei (strain TW08/27) (Whipple's bacillus), this protein is DNA-directed RNA polymerase subunit omega.